Reading from the N-terminus, the 216-residue chain is NKG2-D type II integral membrane protein (216 aa).

Residues 1-51 (MGWIRGRRPRHNLEMSEFHNYKLGLAKSDFSTRCQKQRCPVIKSKCRENAS) are Cytoplasmic-facing. The helical; Signal-anchor for type II membrane protein transmembrane segment at 52 to 72 (PLFFCCFIAVAMGIRFIIMVT) threads the bilayer. Residues 73-216 (IWSAVFLNSL…NTYICMQRTV (144 aa)) are Extracellular-facing. 2 cysteine pairs are disulfide-bonded: C96–C105 and C99–C110. The region spanning 98–213 (PCPKNWICYK…SIPNTYICMQ (116 aa)) is the C-type lectin domain. N-linked (GlcNAc...) asparagine glycans are attached at residues N115, N131, N163, and N202. Intrachain disulfides connect C127–C211 and C189–C203.

Homodimer; disulfide-linked. Heterohexamer composed of two subunits of KLRK1 and four subunits of HCST/DAP10. Interacts (via transmembrane domain) with HCST/DAP10 (via transmembrane domain); the interaction is required for KLRK1 NK cell surface and induces NK cell-mediated cytotoxicity. Can form disulfide-bonded heterodimer with CD94. Interacts with CEACAM1; recruits PTPN6 that dephosphorylates VAV1. As to expression, natural killer cells.

The protein localises to the cell membrane. Functions as an activating and costimulatory receptor involved in immunosurveillance upon binding to various cellular stress-inducible ligands displayed at the surface of autologous tumor cells and virus-infected cells. Provides both stimulatory and costimulatory innate immune responses on activated killer (NK) cells, leading to cytotoxic activity. Acts as a costimulatory receptor for T-cell receptor (TCR) in CD8(+) T-cell-mediated adaptive immune responses by amplifying T-cell activation. Stimulates perforin-mediated elimination of ligand-expressing tumor cells. Signaling involves calcium influx, culminating in the expression of TNF-alpha. Participates in NK cell-mediated bone marrow graft rejection. May play a regulatory role in differentiation and survival of NK cells. Binds to ligands belonging to various subfamilies of MHC class I-related glycoproteins. This is NKG2-D type II integral membrane protein (KLRK1) from Macaca fascicularis (Crab-eating macaque).